The primary structure comprises 251 residues: Coproheme decarboxylase (251 aa).

Residues Arg133, 147 to 151 (YPMSK), His174, Gln187, and Ser225 contribute to the Fe-coproporphyrin III site. Tyr147 is a catalytic residue.

Belongs to the ChdC family. Type 1 subfamily. Requires Fe-coproporphyrin III as cofactor.

It catalyses the reaction Fe-coproporphyrin III + 2 H2O2 + 2 H(+) = heme b + 2 CO2 + 4 H2O. It carries out the reaction Fe-coproporphyrin III + H2O2 + H(+) = harderoheme III + CO2 + 2 H2O. The catalysed reaction is harderoheme III + H2O2 + H(+) = heme b + CO2 + 2 H2O. The protein operates within porphyrin-containing compound metabolism; protoheme biosynthesis. Involved in coproporphyrin-dependent heme b biosynthesis. Catalyzes the decarboxylation of Fe-coproporphyrin III (coproheme) to heme b (protoheme IX), the last step of the pathway. The reaction occurs in a stepwise manner with a three-propionate intermediate. This Listeria monocytogenes serotype 4b (strain CLIP80459) protein is Coproheme decarboxylase.